The primary structure comprises 338 residues: 3-dehydroquinate synthase (338 aa).

Residues 58–63 (DGERAK), 92–96 (GTTGD), 116–117 (TT), Lys129, and Lys138 contribute to the NAD(+) site. Zn(2+)-binding residues include Glu169, His229, and His245.

It belongs to the sugar phosphate cyclases superfamily. Dehydroquinate synthase family. The cofactor is NAD(+). Requires Co(2+) as cofactor. Zn(2+) serves as cofactor.

It localises to the cytoplasm. It carries out the reaction 7-phospho-2-dehydro-3-deoxy-D-arabino-heptonate = 3-dehydroquinate + phosphate. It participates in metabolic intermediate biosynthesis; chorismate biosynthesis; chorismate from D-erythrose 4-phosphate and phosphoenolpyruvate: step 2/7. Catalyzes the conversion of 3-deoxy-D-arabino-heptulosonate 7-phosphate (DAHP) to dehydroquinate (DHQ). The chain is 3-dehydroquinate synthase from Picrophilus torridus (strain ATCC 700027 / DSM 9790 / JCM 10055 / NBRC 100828 / KAW 2/3).